Reading from the N-terminus, the 227-residue chain is (S)-2-haloacid dehalogenase (227 aa).

The Nucleophile role is filled by aspartate 10. An (S)-2-haloacid is bound by residues 11–12 (LY), arginine 41, and 118–119 (SN). The interval 175–180 (SSNAWD) is important for catalytic activity.

It belongs to the HAD-like hydrolase superfamily. S-2-haloalkanoic acid dehalogenase family. As to quaternary structure, homotetramer.

The catalysed reaction is an (S)-2-haloacid + H2O = a (2R)-2-hydroxycarboxylate + a halide anion + H(+). It carries out the reaction (S)-2-chloropropanoate + H2O = (R)-lactate + chloride + H(+). Functionally, catalyzes the hydrolytic dehalogenation of small (S)-2-haloalkanoic acids to yield the corresponding (R)-2-hydroxyalkanoic acids. Acts on acids of short chain lengths, C(2) to C(4), with inversion of configuration at C-2. Active with 2-halogenated carboxylic acids and converts only the S-isomer (or L-isomer) of 2-chloropropionic acid with inversion of configuration to produce R-lactate (or D-isomer). This is (S)-2-haloacid dehalogenase from Pseudomonas putida (Arthrobacter siderocapsulatus).